The primary structure comprises 664 residues: UvrABC system protein B (664 aa).

The Helicase ATP-binding domain maps to 23–180; it reads EGLNRGMRFQ…ERLARIGYQR (158 aa). 36–43 is a binding site for ATP; it reads GVTGSGKT. The short motif at 89-112 is the Beta-hairpin element; the sequence is YYDYYQPEAYIPTKDLYIEKNADI. The Helicase C-terminal domain maps to 429–588; it reads DLVNEIVKVK…ITPRSVIKPL (160 aa). The UVR domain occupies 622–657; that stretch reads EEYMAVLEEEMYRAASELRYEDAAALRDELFRIREE.

The protein belongs to the UvrB family. In terms of assembly, forms a heterotetramer with UvrA during the search for lesions. Interacts with UvrC in an incision complex.

Its subcellular location is the cytoplasm. The UvrABC repair system catalyzes the recognition and processing of DNA lesions. A damage recognition complex composed of 2 UvrA and 2 UvrB subunits scans DNA for abnormalities. Upon binding of the UvrA(2)B(2) complex to a putative damaged site, the DNA wraps around one UvrB monomer. DNA wrap is dependent on ATP binding by UvrB and probably causes local melting of the DNA helix, facilitating insertion of UvrB beta-hairpin between the DNA strands. Then UvrB probes one DNA strand for the presence of a lesion. If a lesion is found the UvrA subunits dissociate and the UvrB-DNA preincision complex is formed. This complex is subsequently bound by UvrC and the second UvrB is released. If no lesion is found, the DNA wraps around the other UvrB subunit that will check the other stand for damage. This Thermotoga petrophila (strain ATCC BAA-488 / DSM 13995 / JCM 10881 / RKU-1) protein is UvrABC system protein B.